Reading from the N-terminus, the 514-residue chain is Cobyric acid synthase (514 aa).

A GATase cobBQ-type domain is found at 263-457 (ALDVAVIRLP…LHGIFDNDPL (195 aa)). The active-site Nucleophile is Cys-344. The active site involves His-449.

This sequence belongs to the CobB/CobQ family. CobQ subfamily.

It functions in the pathway cofactor biosynthesis; adenosylcobalamin biosynthesis. Its function is as follows. Catalyzes amidations at positions B, D, E, and G on adenosylcobyrinic A,C-diamide. NH(2) groups are provided by glutamine, and one molecule of ATP is hydrogenolyzed for each amidation. The polypeptide is Cobyric acid synthase (Desulfitobacterium hafniense (strain DSM 10664 / DCB-2)).